The chain runs to 246 residues: Phosphatidylserine decarboxylase proenzyme (246 aa).

The active-site Schiff-base intermediate with substrate; via pyruvic acid is S204. A Pyruvic acid (Ser); by autocatalysis modification is found at S204.

It belongs to the phosphatidylserine decarboxylase family. PSD-A subfamily. As to quaternary structure, heterodimer of a large membrane-associated beta subunit and a small pyruvoyl-containing alpha subunit. Pyruvate serves as cofactor. Is synthesized initially as an inactive proenzyme. Formation of the active enzyme involves a self-maturation process in which the active site pyruvoyl group is generated from an internal serine residue via an autocatalytic post-translational modification. Two non-identical subunits are generated from the proenzyme in this reaction, and the pyruvate is formed at the N-terminus of the alpha chain, which is derived from the carboxyl end of the proenzyme. The post-translation cleavage follows an unusual pathway, termed non-hydrolytic serinolysis, in which the side chain hydroxyl group of the serine supplies its oxygen atom to form the C-terminus of the beta chain, while the remainder of the serine residue undergoes an oxidative deamination to produce ammonia and the pyruvoyl prosthetic group on the alpha chain.

It localises to the cell membrane. It catalyses the reaction a 1,2-diacyl-sn-glycero-3-phospho-L-serine + H(+) = a 1,2-diacyl-sn-glycero-3-phosphoethanolamine + CO2. It functions in the pathway phospholipid metabolism; phosphatidylethanolamine biosynthesis; phosphatidylethanolamine from CDP-diacylglycerol: step 2/2. In terms of biological role, catalyzes the formation of phosphatidylethanolamine (PtdEtn) from phosphatidylserine (PtdSer). This chain is Phosphatidylserine decarboxylase proenzyme, found in Zymomonas mobilis subsp. mobilis (strain ATCC 31821 / ZM4 / CP4).